The primary structure comprises 278 residues: Movement protein (278 aa).

Residues 256-278 (TLRQEGRDKGDNRRVGVGESPTN) form a disordered region. Residues 259–271 (QEGRDKGDNRRVG) show a composition bias toward basic and acidic residues.

This sequence belongs to the tobamoviruses movement protein family.

In Vitis vinifera (Grape), this protein is Movement protein.